The sequence spans 83 residues: Acylphosphatase (83 aa).

In terms of domain architecture, Acylphosphatase-like spans 1–83; the sequence is MIEGRVQRVG…TGDDWFEVRY (83 aa). Residues arginine 12 and asparagine 30 contribute to the active site.

It belongs to the acylphosphatase family.

The catalysed reaction is an acyl phosphate + H2O = a carboxylate + phosphate + H(+). The polypeptide is Acylphosphatase (acyP) (Synechococcus sp. (strain CC9605)).